We begin with the raw amino-acid sequence, 500 residues long: NAD(P)H-quinone oxidoreductase chain 4, chloroplastic (500 aa).

The next 14 helical transmembrane spans lie at 4 to 24 (FYWL…IALL), 37 to 57 (ICIC…HFQL), 80 to 100 (LGID…TTLA), 113 to 130 (LFHF…GLFS), 134 to 154 (LLLF…LLSM), 167 to 187 (FILY…GMGL), 208 to 228 (ALEI…SPII), 242 to 262 (HYST…YGLV), 272 to 292 (AHSI…IYAA), 305 to 325 (IAYS…SITD), 330 to 350 (GAIL…FLAG), 386 to 406 (LALP…GIIT), 416 to 436 (ILIT…SLSM), and 462 to 482 (IFIL…PDFV).

This sequence belongs to the complex I subunit 4 family.

It is found in the plastid. It localises to the chloroplast thylakoid membrane. It catalyses the reaction a plastoquinone + NADH + (n+1) H(+)(in) = a plastoquinol + NAD(+) + n H(+)(out). The enzyme catalyses a plastoquinone + NADPH + (n+1) H(+)(in) = a plastoquinol + NADP(+) + n H(+)(out). The sequence is that of NAD(P)H-quinone oxidoreductase chain 4, chloroplastic from Nuphar advena (Common spatterdock).